Consider the following 154-residue polypeptide: Large ribosomal subunit protein uL16 (154 aa).

The protein belongs to the universal ribosomal protein uL16 family. Part of the 50S ribosomal subunit.

Binds 23S rRNA and is also seen to make contacts with the A and possibly P site tRNAs. This is Large ribosomal subunit protein uL16 from Synechococcus sp. (strain RCC307).